Consider the following 265-residue polypeptide: Putative N(omega)-hydroxy-L-arginine synthase DcsA (265 aa).

The protein belongs to the DcsA family. Heme is required as a cofactor.

Involved in the biosynthesis of the antibiotic D-cycloserine (DCS), a cyclic structural analog of D-alanine, used as an antitubercular agent. Could catalyze the production of N(omega)-hydroxy-L-arginine (NHA) from L-arginine. The sequence is that of Putative N(omega)-hydroxy-L-arginine synthase DcsA from Streptomyces lavendulae.